The following is a 245-amino-acid chain: uncharacterized protein (245 aa).

This is an uncharacterized protein from Bacillus subtilis (strain 168).